The following is a 364-amino-acid chain: Ribosomal RNA large subunit methyltransferase F (364 aa).

The span at 1–17 shows a compositional bias: low complexity; it reads MPKPAIKTAAKPATSSA. The disordered stretch occupies residues 1 to 53; that stretch reads MPKPAIKTAAKPATSSAGKRGKPNTPKSVAKPKTAKPKTASKPKVKPGEKKRL. The segment covering 33 to 53 has biased composition (basic residues); the sequence is KTAKPKTASKPKVKPGEKKRL.

Belongs to the methyltransferase superfamily. METTL16/RlmF family.

Its subcellular location is the cytoplasm. The catalysed reaction is adenosine(1618) in 23S rRNA + S-adenosyl-L-methionine = N(6)-methyladenosine(1618) in 23S rRNA + S-adenosyl-L-homocysteine + H(+). Its function is as follows. Specifically methylates the adenine in position 1618 of 23S rRNA. This is Ribosomal RNA large subunit methyltransferase F from Shewanella sp. (strain MR-7).